The sequence spans 278 residues: MDVRQSIHSEHAKTLDTQALRREFLIENIFVADEYTMVYSHIDRIIVGGIMPVSHPVEIGGEVGKQLGVSRLLDRRELGVINIGGAGAIIVDGQRHDIGHRDALYISKGAKELVFVSNEASRPAKFYYNCAPAHTAYPTKKVSPADVAPVTLGDNLTSNRRTINKYFVPDVLETCQLSMGLTELAPGNLWNTMPCHTHERRMEVYLYFNMEEDSCVFHMMGQPQETRHIVMRNEQAVISPSWSIHSGVGTKAYTFIWGMVGENQVFDDMDHVAVQDLR.

His-196, His-198, Glu-203, and His-245 together coordinate Zn(2+).

Belongs to the KduI family. Requires Zn(2+) as cofactor.

The enzyme catalyses 5-dehydro-4-deoxy-D-glucuronate = 3-deoxy-D-glycero-2,5-hexodiulosonate. It functions in the pathway glycan metabolism; pectin degradation; 2-dehydro-3-deoxy-D-gluconate from pectin: step 4/5. Catalyzes the isomerization of 5-dehydro-4-deoxy-D-glucuronate to 3-deoxy-D-glycero-2,5-hexodiulosonate. This chain is 4-deoxy-L-threo-5-hexosulose-uronate ketol-isomerase, found in Salmonella paratyphi A (strain ATCC 9150 / SARB42).